The sequence spans 317 residues: Melanocyte-stimulating hormone receptor (317 aa).

The Extracellular segment spans residues 1–37 (MPVLGSQRRLLGSLNCTPPATFPLTLAPNRTGPQCLE). Residue Asn-29 is glycosylated (N-linked (GlcNAc...) asparagine). The chain crosses the membrane as a helical span at residues 38–63 (VSIPDGLFLSLGLVSLVENVLVVAAI). Residues 64-72 (AKNRNLHSP) lie on the Cytoplasmic side of the membrane. A helical transmembrane segment spans residues 73-93 (MYYFICCLAMSDLLVSVSNVL). At 94-118 (ETAVMLLLEAGALAAQAAVVQQLDN) the chain is on the extracellular side. The chain crosses the membrane as a helical span at residues 119–140 (VIDVLICGSMVSSLCFLGAIAV). The Cytoplasmic segment spans residues 141-163 (DRYISIFYALRYHSVVTLPRAWR). Residues 164–183 (IIAAIWVASILTSLLFITYY) form a helical membrane-spanning segment. Residues 184–191 (NHTVVLLC) are Extracellular-facing. The chain crosses the membrane as a helical span at residues 192–211 (LVGFFIAMLALMAVLYVHML). Over 212–240 (ARACQHARGIARLQKRQRPIHQGFGLKGA) the chain is Cytoplasmic. A helical transmembrane segment spans residues 241–266 (ATLTILLGVFFLCWGPFFLHLSLIVL). Over 267–279 (CPQHPTCGCIFKN) the chain is Extracellular. A helical membrane pass occupies residues 280–300 (FNLFLALIICNAIVDPLIYAF). The Cytoplasmic portion of the chain corresponds to 301–317 (RSQELRKTLQEVLQCSW). A lipid anchor (S-palmitoyl cysteine) is attached at Cys-315.

Belongs to the G-protein coupled receptor 1 family. In terms of assembly, interacts with MGRN1, but does not undergo MGRN1-mediated ubiquitination; this interaction competes with GNAS-binding and thus inhibits agonist-induced cAMP production. Interacts with OPN3; the interaction results in a decrease in MC1R-mediated cAMP signaling and ultimately a decrease in melanin production in melanocytes.

Its subcellular location is the cell membrane. Its function is as follows. Receptor for MSH (alpha, beta and gamma) and ACTH. The activity of this receptor is mediated by G proteins which activate adenylate cyclase. Mediates melanogenesis, the production of eumelanin (black/brown) and phaeomelanin (red/yellow), via regulation of cAMP signaling in melanocytes. The polypeptide is Melanocyte-stimulating hormone receptor (MC1R) (Dama dama (Fallow deer)).